A 150-amino-acid polypeptide reads, in one-letter code: Cytochrome c oxidase subunit 5A, mitochondrial (150 aa).

The N-terminal 41 residues, 1 to 41 (MLGAALRRCAVAATTWAGPRGLLHSSRTPGPAAAIQSVRCY), are a transit peptide targeting the mitochondrion. The short motif at 2–17 (LGAALRRCAVAATTWA) is the SIFI-degron element. Lysine 87 and lysine 113 each carry N6-acetyllysine. Position 141 is a phosphothreonine (threonine 141).

It belongs to the cytochrome c oxidase subunit 5A family. In terms of assembly, component of the cytochrome c oxidase (complex IV, CIV), a multisubunit enzyme composed of 14 subunits. The complex is composed of a catalytic core of 3 subunits MT-CO1, MT-CO2 and MT-CO3, encoded in the mitochondrial DNA, and 11 supernumerary subunits COX4I, COX5A, COX5B, COX6A, COX6B, COX6C, COX7A, COX7B, COX7C, COX8 and NDUFA4, which are encoded in the nuclear genome. The complex exists as a monomer or a dimer and forms supercomplexes (SCs) in the inner mitochondrial membrane with NADH-ubiquinone oxidoreductase (complex I, CI) and ubiquinol-cytochrome c oxidoreductase (cytochrome b-c1 complex, complex III, CIII), resulting in different assemblies (supercomplex SCI(1)III(2)IV(1) and megacomplex MCI(2)III(2)IV(2)). Interacts with AFG1L. Interacts with RAB5IF. In terms of processing, in response to mitochondrial stress, the precursor protein is ubiquitinated by the SIFI complex in the cytoplasm before mitochondrial import, leading to its degradation. Within the SIFI complex, UBR4 initiates ubiquitin chain that are further elongated or branched by KCMF1.

It is found in the mitochondrion inner membrane. The protein operates within energy metabolism; oxidative phosphorylation. Component of the cytochrome c oxidase, the last enzyme in the mitochondrial electron transport chain which drives oxidative phosphorylation. The respiratory chain contains 3 multisubunit complexes succinate dehydrogenase (complex II, CII), ubiquinol-cytochrome c oxidoreductase (cytochrome b-c1 complex, complex III, CIII) and cytochrome c oxidase (complex IV, CIV), that cooperate to transfer electrons derived from NADH and succinate to molecular oxygen, creating an electrochemical gradient over the inner membrane that drives transmembrane transport and the ATP synthase. Cytochrome c oxidase is the component of the respiratory chain that catalyzes the reduction of oxygen to water. Electrons originating from reduced cytochrome c in the intermembrane space (IMS) are transferred via the dinuclear copper A center (CU(A)) of subunit 2 and heme A of subunit 1 to the active site in subunit 1, a binuclear center (BNC) formed by heme A3 and copper B (CU(B)). The BNC reduces molecular oxygen to 2 water molecules using 4 electrons from cytochrome c in the IMS and 4 protons from the mitochondrial matrix. This Colobus guereza (Mantled guereza) protein is Cytochrome c oxidase subunit 5A, mitochondrial (COX5A).